The sequence spans 213 residues: High frequency lysogenization protein HflD homolog (213 aa).

Residues 79–126 (QGLNAELTRYTLSLMVLERKLSSAKGALDTLGNRINGLQRQLEHFDLQ) are a coiled coil.

It belongs to the HflD family.

Its subcellular location is the cytoplasm. The protein resides in the cell inner membrane. This Shigella flexneri serotype 5b (strain 8401) protein is High frequency lysogenization protein HflD homolog.